The following is a 296-amino-acid chain: N-acetylmuramic acid 6-phosphate etherase (296 aa).

An SIS domain is found at 54–217 (VIASFQQGGR…STTAMVGIGK (164 aa)). The active-site Proton donor is the E82. E113 is a catalytic residue.

The protein belongs to the GCKR-like family. MurNAc-6-P etherase subfamily. As to quaternary structure, homodimer.

The enzyme catalyses N-acetyl-D-muramate 6-phosphate + H2O = N-acetyl-D-glucosamine 6-phosphate + (R)-lactate. The protein operates within amino-sugar metabolism; N-acetylmuramate degradation. In terms of biological role, specifically catalyzes the cleavage of the D-lactyl ether substituent of MurNAc 6-phosphate, producing GlcNAc 6-phosphate and D-lactate. The chain is N-acetylmuramic acid 6-phosphate etherase from Shouchella clausii (strain KSM-K16) (Alkalihalobacillus clausii).